A 456-amino-acid chain; its full sequence is MTKKALSAVILAAGKGTRMYSDLPKVLHTIAGKPMVKHVIDTAHQLGSENIHLIYGHGGDLMRTHLANEQVNWVLQTEQLGTAHAVQQAAPFFKDNENIVVLYGDAPLITKETLEKLIEAKPENGIALLTVNLDNPTGYGRIIRENGNVVAIVEQKDANAEQLNIKEVNTGVMVSDGASFKKWLARVGNNNAQGEYYLTDLIALANQDNCQVVAVQATDVMEVEGANNRLQLAALERYFQNKQASKLLLEGVMIYDPARFDLRGTLEHGKDVEIDVNVIIEGNVKLGDRVKIGTGCVLKNVVIGNDVEIKPYSVLEDSIVGEKAAIGPFSRLRPGAELAAETHVGNFVEIKKSTVGKGSKVNHLTYVGDSEIGSNCNIGAGVITCNYDGANKFKTIIGDDVFVGSDTQLVAPVKVANGATIGAGTTITRDVGENELVITRVAQRHIQGWQRPIKKK.

Residues 1–229 (MTKKALSAVI…VMEVEGANNR (229 aa)) are pyrophosphorylase. Residues 11-14 (LAAG), lysine 25, glutamine 76, 81-82 (GT), 103-105 (YGD), glycine 140, glutamate 154, asparagine 169, and asparagine 227 each bind UDP-N-acetyl-alpha-D-glucosamine. Aspartate 105 is a binding site for Mg(2+). Asparagine 227 is a Mg(2+) binding site. The linker stretch occupies residues 230–250 (LQLAALERYFQNKQASKLLLE). The segment at 251–456 (GVMIYDPARF…QGWQRPIKKK (206 aa)) is N-acetyltransferase. Residues arginine 333 and lysine 351 each coordinate UDP-N-acetyl-alpha-D-glucosamine. Catalysis depends on histidine 363, which acts as the Proton acceptor. Residues tyrosine 366 and asparagine 377 each contribute to the UDP-N-acetyl-alpha-D-glucosamine site. Residues alanine 380, 386-387 (NY), serine 405, alanine 423, and arginine 440 contribute to the acetyl-CoA site.

The protein in the N-terminal section; belongs to the N-acetylglucosamine-1-phosphate uridyltransferase family. In the C-terminal section; belongs to the transferase hexapeptide repeat family. As to quaternary structure, homotrimer. The cofactor is Mg(2+).

It localises to the cytoplasm. It catalyses the reaction alpha-D-glucosamine 1-phosphate + acetyl-CoA = N-acetyl-alpha-D-glucosamine 1-phosphate + CoA + H(+). The enzyme catalyses N-acetyl-alpha-D-glucosamine 1-phosphate + UTP + H(+) = UDP-N-acetyl-alpha-D-glucosamine + diphosphate. Its pathway is nucleotide-sugar biosynthesis; UDP-N-acetyl-alpha-D-glucosamine biosynthesis; N-acetyl-alpha-D-glucosamine 1-phosphate from alpha-D-glucosamine 6-phosphate (route II): step 2/2. It participates in nucleotide-sugar biosynthesis; UDP-N-acetyl-alpha-D-glucosamine biosynthesis; UDP-N-acetyl-alpha-D-glucosamine from N-acetyl-alpha-D-glucosamine 1-phosphate: step 1/1. It functions in the pathway bacterial outer membrane biogenesis; LPS lipid A biosynthesis. In terms of biological role, catalyzes the last two sequential reactions in the de novo biosynthetic pathway for UDP-N-acetylglucosamine (UDP-GlcNAc). The C-terminal domain catalyzes the transfer of acetyl group from acetyl coenzyme A to glucosamine-1-phosphate (GlcN-1-P) to produce N-acetylglucosamine-1-phosphate (GlcNAc-1-P), which is converted into UDP-GlcNAc by the transfer of uridine 5-monophosphate (from uridine 5-triphosphate), a reaction catalyzed by the N-terminal domain. The chain is Bifunctional protein GlmU from Haemophilus influenzae (strain ATCC 51907 / DSM 11121 / KW20 / Rd).